The sequence spans 236 residues: MDLTLLQWGDAGWGDELARGAMMTVVVAACSYFFGIIFGSLFAAAKLSRFWSLRLLGDVYTTVVRGVPELLIIFLVFFGGGTLLRTIANGLFGYEGYIEPPIFVIGVLCISVSAGAYATEVIRAAVLAVPPGQIEAAKSIGMGPWLRLRRVLIPQAARFALPGLGNVWQFTLKDTSLISVVGLVEIMRTAAMGAGSTKQPFTFYITAFVIFLLLSSVSNRGFLKAEKWANRGVRSQ.

Residues 21–222 (AMMTVVVAAC…LLSSVSNRGF (202 aa)) enclose the ABC transmembrane type-1 domain. Transmembrane regions (helical) follow at residues 25 to 45 (VVVAACSYFFGIIFGSLFAAA), 63 to 83 (VVRGVPELLIIFLVFFGGGTL), 102 to 122 (IFVIGVLCISVSAGAYATEVI), and 199 to 219 (QPFTFYITAFVIFLLLSSVSN).

Belongs to the binding-protein-dependent transport system permease family. HisMQ subfamily.

The protein localises to the cell inner membrane. Functionally, component of the nopaline active transport system probably consisting of four subunits: Q, M, P and T. This system is also capable of transporting octopine provided that catabolic functions are induced with nopaline. This chain is Nopaline transport system permease protein NocQ (nocQ), found in Agrobacterium fabrum (strain C58 / ATCC 33970) (Agrobacterium tumefaciens (strain C58)).